The primary structure comprises 778 residues: Aconitate hydratase, mitochondrial (778 aa).

The transit peptide at 1-16 directs the protein to the mitochondrion; sequence MLSARSAIKRPIVRGL. Residues Gln95 and 188 to 190 each bind substrate; that span reads DSH. Residue Cys382 coordinates [4Fe-4S] cluster. Position 391 is a phosphoserine (Ser391). The residue at position 409 (Thr409) is a Phosphothreonine. Residues Cys445 and Cys448 each contribute to the [4Fe-4S] cluster site. Arg471 and Arg476 together coordinate substrate. A Phosphoserine modification is found at Ser556. Substrate-binding positions include Arg604 and 667–668; that span reads SR.

The protein belongs to the aconitase/IPM isomerase family. Monomer. Binds to mitochondrial DNA (mtDNA) and identified as component of mitochondrial nucleoids. It depends on [4Fe-4S] cluster as a cofactor.

The protein resides in the mitochondrion. It is found in the cytoplasm. The catalysed reaction is citrate = D-threo-isocitrate. Its pathway is carbohydrate metabolism; tricarboxylic acid cycle; isocitrate from oxaloacetate: step 2/2. With respect to regulation, subject to catabolite regulation. Functionally, catalyzes the isomerization of citrate to isocitrate via cis-aconitate, a step in the citric acid cycle. Can also provide minor contributions to the reversible dehydration of (R)-homocitrate to cis-homoaconitate, a step in the alpha-aminoadipate pathway for lysine biosynthesis. Also plays an essential role in mtDNA maintenance. May directly protect mtDNA from accumulation of point mutations and ssDNA breaks as a component of mitochondrial nucleoids, or by preventing accumulation of iron citrate thereby alleviating its detrimental effects in mitochondria. In Saccharomyces cerevisiae (strain ATCC 204508 / S288c) (Baker's yeast), this protein is Aconitate hydratase, mitochondrial.